Reading from the N-terminus, the 95-residue chain is Aspartyl/glutamyl-tRNA(Asn/Gln) amidotransferase subunit C (95 aa).

This sequence belongs to the GatC family. Heterotrimer of A, B and C subunits.

It catalyses the reaction L-glutamyl-tRNA(Gln) + L-glutamine + ATP + H2O = L-glutaminyl-tRNA(Gln) + L-glutamate + ADP + phosphate + H(+). The catalysed reaction is L-aspartyl-tRNA(Asn) + L-glutamine + ATP + H2O = L-asparaginyl-tRNA(Asn) + L-glutamate + ADP + phosphate + 2 H(+). In terms of biological role, allows the formation of correctly charged Asn-tRNA(Asn) or Gln-tRNA(Gln) through the transamidation of misacylated Asp-tRNA(Asn) or Glu-tRNA(Gln) in organisms which lack either or both of asparaginyl-tRNA or glutaminyl-tRNA synthetases. The reaction takes place in the presence of glutamine and ATP through an activated phospho-Asp-tRNA(Asn) or phospho-Glu-tRNA(Gln). The sequence is that of Aspartyl/glutamyl-tRNA(Asn/Gln) amidotransferase subunit C from Geobacter metallireducens (strain ATCC 53774 / DSM 7210 / GS-15).